The sequence spans 145 residues: MNKYEIMLIIDPAIDMAMANEIVESVFDKKNINKVVKLENSTLAYPINKSSKAQYVVYTLEAKSELIAEFTRRANIAKFIWRQMVINLDTEKGFQRSKKAFKHRIAKDAKVANKGTGVKQLIENLEKTMSHKAKPSFKKEVKKSN.

This sequence belongs to the bacterial ribosomal protein bS6 family.

Its function is as follows. Binds together with bS18 to 16S ribosomal RNA. This Mycoplasmopsis agalactiae (strain NCTC 10123 / CIP 59.7 / PG2) (Mycoplasma agalactiae) protein is Small ribosomal subunit protein bS6.